The sequence spans 294 residues: MSMLKNINTEKRNPRSFNLDSMSVQESVNLMIDEEYGVIEALKEQSLNIAKIVEVTSQALKKGGRIVYVGAGTSGRLGILDAVECPPTFSVDYNTIIGLIAGGEKAFIQAQEGAEDNPDFGKEDLLKINLTAKDVVIGIAASGRTPYVIGALEYANSIEATTIAISCTKQAKISSYADYNIEAVPGPEVLTGSTRLKAGTTQKLILNIISTLSMVSVGKVYQNLMVDVKPTNEKLVERSKNIICEATGVDYVTAQDFYMKANKSVKVAIVMILNDCDYEQALAILKKNNNFIKS.

One can recognise an SIS domain in the interval 56–219 (TSQALKKGGR…STLSMVSVGK (164 aa)). Glu84 (proton donor) is an active-site residue. The active site involves Glu115.

This sequence belongs to the GCKR-like family. MurNAc-6-P etherase subfamily. Homodimer.

The catalysed reaction is N-acetyl-D-muramate 6-phosphate + H2O = N-acetyl-D-glucosamine 6-phosphate + (R)-lactate. Its pathway is amino-sugar metabolism; 1,6-anhydro-N-acetylmuramate degradation. The protein operates within amino-sugar metabolism; N-acetylmuramate degradation. It participates in cell wall biogenesis; peptidoglycan recycling. Functionally, specifically catalyzes the cleavage of the D-lactyl ether substituent of MurNAc 6-phosphate, producing GlcNAc 6-phosphate and D-lactate. Together with AnmK, is also required for the utilization of anhydro-N-acetylmuramic acid (anhMurNAc) either imported from the medium or derived from its own cell wall murein, and thus plays a role in cell wall recycling. This Francisella philomiragia subsp. philomiragia (strain ATCC 25017 / CCUG 19701 / FSC 153 / O#319-036) protein is N-acetylmuramic acid 6-phosphate etherase.